The primary structure comprises 1025 residues: Exportin-T (1025 aa).

It belongs to the exportin family.

The protein localises to the nucleus. The protein resides in the cytoplasm. In terms of biological role, tRNA nucleus export receptor which facilitates tRNA translocation across the nuclear pore complex. Involved in pre-tRNA splicing, probably by affecting the interaction of pre-tRNA with splicing endonuclease. In Candida albicans (strain SC5314 / ATCC MYA-2876) (Yeast), this protein is Exportin-T (LOS1).